Consider the following 535-residue polypeptide: Alpha-1,3-mannosyl-glycoprotein 4-beta-N-acetylglucosaminyltransferase A (535 aa).

Residues 1–6 are Cytoplasmic-facing; the sequence is MRLRNG. A helical; Signal-anchor for type II membrane protein transmembrane segment spans residues 7–27; sequence TVATVLAFITSFLTLSWYTTW. At 28-535 the chain is on the lumenal side; sequence QNGKEKVIAY…NEIHIKKVTN (508 aa). Residues 31-57 adopt a coiled-coil conformation; it reads KEKVIAYQREFLALKERLRIAEHRISQ. N-linked (GlcNAc...) asparagine glycans are attached at residues asparagine 77 and asparagine 458. The residue at position 474 (serine 474) is a Phosphoserine.

The protein belongs to the glycosyltransferase 54 family. A divalent metal cation serves as cofactor. In terms of processing, N-glycosylated. As to expression, highly expressed in small intestine, kidney, lung and spleen. Weakly expressed in brain, heart and liver.

It is found in the golgi apparatus membrane. Its subcellular location is the secreted. It carries out the reaction N(4)-{beta-D-GlcNAc-(1-&gt;2)-alpha-D-Man-(1-&gt;3)-[beta-D-GlcNAc-(1-&gt;2)-alpha-D-Man-(1-&gt;6)]-beta-D-Man-(1-&gt;4)-beta-D-GlcNAc-(1-&gt;4)-beta-D-GlcNAc}-L-asparaginyl-[protein] + UDP-N-acetyl-alpha-D-glucosamine = N(4)-{beta-D-GlcNAc-(1-&gt;2)-[beta-D-GlcNAc-(1-&gt;4)]-alpha-D-Man-(1-&gt;3)-[beta-D-GlcNAc-(1-&gt;2)-alpha-D-Man-(1-&gt;6)]-beta-D-Man-(1-&gt;4)-beta-D-GlcNAc-(1-&gt;4)-beta-D-GlcNAc}-L-asparaginyl-[protein] + UDP + H(+). It catalyses the reaction an N(4)-{beta-D-GlcNAc-(1-&gt;2)-alpha-D-Man-(1-&gt;3)-[alpha-D-Man-(1-&gt;6)]-beta-D-Man-(1-&gt;4)-beta-D-GlcNAc-(1-&gt;4)-beta-D-GlcNAc}-L-asparaginyl-[protein] + UDP-N-acetyl-alpha-D-glucosamine = an N(4)-{beta-D-GlcNAc-(1-&gt;2)-[beta-D-GlcNAc-(1-&gt;4)]-alpha-D-Man-(1-&gt;3)-[alpha-D-Man-(1-&gt;6)]-beta-D-Man-(1-&gt;4)-beta-D-GlcNAc-(1-&gt;4)-beta-D-GlcNAc}-L-asparaginyl-[protein] + UDP + H(+). The catalysed reaction is an N(4)-{beta-D-GlcNAc-(1-&gt;2)-alpha-D-Man-(1-&gt;3)-[beta-D-GlcNAc-(1-&gt;2)-[beta-D-GlcNAc-(1-&gt;6)]-alpha-D-Man-(1-&gt;6)]-beta-D-Man-(1-&gt;4)-beta-D-GlcNAc-(1-&gt;4)-beta-D-GlcNAc}-L-asparaginyl-[protein] + UDP-N-acetyl-alpha-D-glucosamine = an N(4)-{beta-D-GlcNAc-(1-&gt;2)-[beta-D-GlcNAc-(1-&gt;4)]-alpha-D-Man-(1-&gt;3)-[beta-D-GlcNAc-(1-&gt;2)-[beta-D-GlcNAc-(1-&gt;6)]-alpha-D-Man-(1-&gt;6)]-beta-D-Man-(1-&gt;4)-beta-D-GlcNAc-(1-&gt;4)-beta-D-GlcNAc}-L-asparaginyl-[protein] + UDP + H(+). The enzyme catalyses an N(4)-{beta-D-GlcNAc-(1-&gt;2)-alpha-D-Man-(1-&gt;3)-[beta-D-GlcNAc-(1-&gt;2)-alpha-D-Man-(1-&gt;6)]-beta-D-Man-(1-&gt;4)-beta-D-GlcNAc-(1-&gt;4)-[alpha-L-Fuc-(1-&gt;6)]-beta-D-GlcNAc}-L-asparaginyl-[protein] + UDP-N-acetyl-alpha-D-glucosamine = N(4)-{beta-D-GlcNAc-(1-&gt;2)-[beta-D-GlcNAc-(1-&gt;4)]-alpha-D-Man-(1-&gt;3)-[beta-D-GlcNAc-(1-&gt;2)-alpha-D-Man-(1-&gt;6)]-beta-D-Man-(1-&gt;4)-beta-D-GlcNAc-(1-&gt;4)-[alpha-L-Fuc-(1-&gt;6)]-beta-D-GlcNAc}-asparaginyl-[protein] + UDP + H(+). It carries out the reaction an N(4)-{beta-D-GlcNAc-(1-&gt;2)-alpha-D-Man-(1-&gt;3)-[beta-D-Gal-(1-&gt;4)-beta-D-GlcNAc-(1-&gt;2)-alpha-D-Man-(1-&gt;6)]-beta-D-Man-(1-&gt;4)-beta-D-GlcNAc-(1-&gt;4)-beta-D-GlcNAc}-L-asparaginyl-[protein] + UDP-N-acetyl-alpha-D-glucosamine = an N(4)-{beta-D-GlcNAc-(1-&gt;2)-[beta-D-GlcNAc-(1-&gt;4)]-alpha-D-Man-(1-&gt;3)-[beta-D-Gal-(1-&gt;4)-beta-D-GlcNAc-(1-&gt;2)-alpha-D-Man-(1-&gt;6)]-beta-D-Man-(1-&gt;4)-beta-D-GlcNAc-(1-&gt;4)-beta-D-GlcNAc}-L-asparaginyl-[protein] + UDP + H(+). It catalyses the reaction N(4)-{beta-D-GlcNAc-(1-&gt;2)-alpha-D-Man-(1-&gt;3)-[alpha-D-Man-(1-&gt;3)-{alpha-D-Man-(1-&gt;6)}-alpha-D-Man-(1-&gt;6)]-beta-D-Man-(1-&gt;4)-beta-D-GlcNAc-(1-&gt;4)-beta-D-GlcNAc}-asparaginyl-[protein] + UDP-N-acetyl-alpha-D-glucosamine = N(4)-{beta-D-GlcNAc-(1-&gt;2)-[beta-D-GlcNAc-(1-&gt;4)]-alpha-D-Man-(1-&gt;3)-[alpha-D-Man-(1-&gt;3)-{alpha-D-Man-(1-&gt;6)}-alpha-D-Man-(1-&gt;6)]-beta-D-Man-(1-&gt;4)-beta-D-GlcNAc-(1-&gt;4)-beta-D-GlcNAc}-asparaginyl-[protein] + UDP + H(+). The catalysed reaction is N(4)-{beta-D-GlcNAc-(1-&gt;2)-alpha-D-Man-(1-&gt;3)-beta-D-Man-(1-&gt;4)-beta-D-GlcNAc-(1-&gt;4)-beta-D-GlcNAc}-asparaginyl-[protein] + UDP-N-acetyl-alpha-D-glucosamine = N(4)-{beta-D-GlcNAc-(1-&gt;2)-[beta-D-GlcNAc-(1-&gt;4)]-alpha-D-Man-(1-&gt;3)-beta-D-Man-(1-&gt;4)-beta-D-GlcNAc-(1-&gt;4)-beta-D-GlcNAc}-asparaginyl-[protein] + UDP + H(+). It participates in protein modification; protein glycosylation. Its activity is regulated as follows. Inhibited by UDP. Functionally, glycosyltransferase that catalyze the transfer of GlcNAc from UDP-GlcNAc to the GlcNAcbeta1-2Manalpha1-3 arm of the core structure of N-linked glycans through a beta1-4 linkage and participates in the production of tri- and tetra-antennary N-linked sugar chains. Involved in glucose transport by mediating SLC2A2/GLUT2 glycosylation, thereby controlling cell-surface expression of SLC2A2 in pancreatic beta cells. This Bos taurus (Bovine) protein is Alpha-1,3-mannosyl-glycoprotein 4-beta-N-acetylglucosaminyltransferase A.